The primary structure comprises 341 residues: Ferredoxin--NADP reductase (341 aa).

7 residues coordinate FAD: Glu-36, Gln-44, Phe-49, Val-89, Phe-123, Asp-289, and Thr-329.

It belongs to the ferredoxin--NADP reductase type 2 family. As to quaternary structure, homodimer. Requires FAD as cofactor.

It catalyses the reaction 2 reduced [2Fe-2S]-[ferredoxin] + NADP(+) + H(+) = 2 oxidized [2Fe-2S]-[ferredoxin] + NADPH. In Ligilactobacillus salivarius (strain UCC118) (Lactobacillus salivarius), this protein is Ferredoxin--NADP reductase.